The chain runs to 74 residues: uncharacterized protein (74 aa).

The helical transmembrane segment at 7–26 (IHLYVMASAMSSSPIFFFFQ) threads the bilayer.

The protein localises to the membrane. This is an uncharacterized protein from Homo sapiens (Human).